The chain runs to 873 residues: DNA mismatch repair protein MutS (873 aa).

601-608 (GPNMSGKS) contributes to the ATP binding site.

It belongs to the DNA mismatch repair MutS family.

This protein is involved in the repair of mismatches in DNA. It is possible that it carries out the mismatch recognition step. This protein has a weak ATPase activity. The protein is DNA mismatch repair protein MutS of Staphylococcus epidermidis (strain ATCC 12228 / FDA PCI 1200).